A 132-amino-acid chain; its full sequence is Small ribosomal subunit protein uS8 (132 aa).

It belongs to the universal ribosomal protein uS8 family. Part of the 30S ribosomal subunit. Contacts proteins S5 and S12.

Functionally, one of the primary rRNA binding proteins, it binds directly to 16S rRNA central domain where it helps coordinate assembly of the platform of the 30S subunit. This chain is Small ribosomal subunit protein uS8, found in Rhizobium johnstonii (strain DSM 114642 / LMG 32736 / 3841) (Rhizobium leguminosarum bv. viciae).